Reading from the N-terminus, the 451-residue chain is MKYFGTDGVRGIANSGLTPEMAFRLGRAGGYVLTEHAENKSTQPRVLVARDTRISGQMLEEALIAGLLSAGIEVLRLGVITTPGVAYLVRIQDADAGVMISASHNPVEDNGIKFFGGDGFKLSDAKEEEIEELLDQPKDTLPRPAAEGLGTVADFPEGNLKYSQFLEQTIPDDLSGIHLAVDGANGSTSNLVSRIFADLNVEFDTMATAPDGLNINKGVGSTHPEALSKFVVEKGAQVGLAFDGDGDRCIAVDELGNIIDGDKIMYICGKFLSERGKLKQDTVVTTVMSNLGLYKALEAAGLHSKQTQVGDRYVVEEMLKDGYNLGGEQSGHVVFLDFNTTGDGMLTGIQLLHVMKETGKKLSELAAEVTTYPQKLVNVKVQDKKAALNNDKIKAVIKDVEDEMAGDGRVLVRPSGTQDLLRVMAEAKTDELVSAYVDRIVDVVKAEVGIE.

Serine 103 serves as the catalytic Phosphoserine intermediate. Mg(2+) is bound by residues serine 103, aspartate 243, aspartate 245, and aspartate 247. Phosphoserine is present on serine 103.

It belongs to the phosphohexose mutase family. It depends on Mg(2+) as a cofactor. Post-translationally, activated by phosphorylation.

It carries out the reaction alpha-D-glucosamine 1-phosphate = D-glucosamine 6-phosphate. In terms of biological role, catalyzes the conversion of glucosamine-6-phosphate to glucosamine-1-phosphate. This is Phosphoglucosamine mutase from Lactiplantibacillus plantarum (strain ATCC BAA-793 / NCIMB 8826 / WCFS1) (Lactobacillus plantarum).